Here is a 160-residue protein sequence, read N- to C-terminus: Transcription elongation factor GreA (160 aa).

Positions 14-76 form a coiled coil; it reads VKKLEEELEY…QLENMLKNAS (63 aa).

The protein belongs to the GreA/GreB family.

Necessary for efficient RNA polymerase transcription elongation past template-encoded arresting sites. The arresting sites in DNA have the property of trapping a certain fraction of elongating RNA polymerases that pass through, resulting in locked ternary complexes. Cleavage of the nascent transcript by cleavage factors such as GreA or GreB allows the resumption of elongation from the new 3'terminus. GreA releases sequences of 2 to 3 nucleotides. The polypeptide is Transcription elongation factor GreA (Clostridium botulinum (strain Okra / Type B1)).